A 251-amino-acid chain; its full sequence is Insulin-induced gene 1 protein (251 aa).

At 1 to 58 (MPRLEEHCWSCSCSTSVKTKDLSSAGWIVCKTGEMMSIITSVLSHAYGSLHSLQSANL) the chain is on the cytoplasmic side. Residues 59 to 81 (IRRGLVLFIVGVVLALVLNLLQI) traverse the membrane as a helical segment. The Extracellular segment spans residues 82 to 100 (QRNVTLFPEEVLDTLFSSA). A helical membrane pass occupies residues 101 to 118 (WWIPLCCGTAAAVVGLLY). Residues 119–133 (PCLDHHLGEPHKFKR) are Cytoplasmic-facing. The chain crosses the membrane as a helical span at residues 134 to 156 (EWASVMRCIAVFVGINHASAKLD). Over 157–159 (FAN) the chain is Extracellular. Residues 160-178 (NVQLSLTLAALSLGLWWTF) form a helical membrane-spanning segment. Residues 179–183 (DRSRS) are Cytoplasmic-facing. Residues 184-205 (GFGLGLTTALLATLIAQLLVYN) form a helical membrane-spanning segment. Over 206–219 (GIYQYTSPDFLYVR) the chain is Extracellular. A helical transmembrane segment spans residues 220–237 (SWLPCIFFSGGVTVGNIG). The Cytoplasmic segment spans residues 238–251 (RQLAMGSTEKIHND). A KxHxx motif is present at residues 245–251 (TEKIHND).

It belongs to the INSIG family. In terms of assembly, interacts with scap; interaction is direct and only takes place in the presence of sterols; it prevents interaction between scap and the coat protein complex II (COPII). Associates with the SCAP-SREBP complex; association is mediated via its interaction with scap and only takes place in the presence of sterols.

It localises to the endoplasmic reticulum membrane. Its function is as follows. Oxysterol-binding protein that mediates feedback control of cholesterol synthesis by controlling both endoplasmic reticulum to Golgi transport of scap and degradation of hmgcr. Acts as a negative regulator of cholesterol biosynthesis by mediating the retention of the SCAP-SREBP complex in the endoplasmic reticulum, thereby blocking the processing of sterol regulatory element-binding proteins (SREBPs). Binds oxysterol, including 25-hydroxycholesterol, regulating interaction with scap and retention of the SCAP-SREBP complex in the endoplasmic reticulum. In presence of oxysterol, interacts with scap, retaining the SCAP-SREBP complex in the endoplasmic reticulum, thereby preventing scap from escorting SREBPs to the Golgi. Sterol deprivation reduces oxysterol-binding, disrupting the interaction between insig1 and scap, thereby promoting Golgi transport of the SCAP-SREBP complex, followed by processing and nuclear translocation of SREBPs. Also regulates cholesterol synthesis by regulating degradation of hmgcr. The polypeptide is Insulin-induced gene 1 protein (Danio rerio (Zebrafish)).